We begin with the raw amino-acid sequence, 405 residues long: L-rhamnonate dehydratase (405 aa).

Residues H33 and R59 each coordinate substrate. Mg(2+)-binding residues include D226, E252, and E280. Catalysis depends on H329, which acts as the Proton acceptor. E349 contacts substrate.

The protein belongs to the mandelate racemase/muconate lactonizing enzyme family. RhamD subfamily. As to quaternary structure, homooctamer; tetramer of dimers. It depends on Mg(2+) as a cofactor.

The catalysed reaction is L-rhamnonate = 2-dehydro-3-deoxy-L-rhamnonate + H2O. Catalyzes the dehydration of L-rhamnonate to 2-keto-3-deoxy-L-rhamnonate (KDR). In Escherichia coli O127:H6 (strain E2348/69 / EPEC), this protein is L-rhamnonate dehydratase.